We begin with the raw amino-acid sequence, 380 residues long: Cytochrome b (380 aa).

A run of 4 helical transmembrane segments spans residues 34-54, 78-99, 114-134, and 179-199; these read FGSL…LLAT, WLIR…YLHI, WNTG…GYVL, and FFAL…THLT. Residues His84 and His98 each contribute to the heme b site. Heme b is bound by residues His183 and His197. His202 lines the a ubiquinone pocket. The next 4 helical transmembrane spans lie at 227–247, 289–309, 321–341, and 348–368; these read PKDL…ALFS, LGGV…PFLH, LSQL…WVGS, and FIII…ILFP.

This sequence belongs to the cytochrome b family. The cytochrome bc1 complex contains 11 subunits: 3 respiratory subunits (MT-CYB, CYC1 and UQCRFS1), 2 core proteins (UQCRC1 and UQCRC2) and 6 low-molecular weight proteins (UQCRH/QCR6, UQCRB/QCR7, UQCRQ/QCR8, UQCR10/QCR9, UQCR11/QCR10 and a cleavage product of UQCRFS1). This cytochrome bc1 complex then forms a dimer. It depends on heme b as a cofactor.

The protein resides in the mitochondrion inner membrane. Component of the ubiquinol-cytochrome c reductase complex (complex III or cytochrome b-c1 complex) that is part of the mitochondrial respiratory chain. The b-c1 complex mediates electron transfer from ubiquinol to cytochrome c. Contributes to the generation of a proton gradient across the mitochondrial membrane that is then used for ATP synthesis. This is Cytochrome b (MT-CYB) from Todus todus (Jamaican tody).